We begin with the raw amino-acid sequence, 452 residues long: Probable phosphoglucosamine mutase (452 aa).

Catalysis depends on Ser101, which acts as the Phosphoserine intermediate. Residues Ser101, Asp242, Asp244, and Asp246 each coordinate Mg(2+). Ser101 carries the phosphoserine modification.

The protein belongs to the phosphohexose mutase family. The cofactor is Mg(2+). In terms of processing, activated by phosphorylation.

It carries out the reaction alpha-D-glucosamine 1-phosphate = D-glucosamine 6-phosphate. Functionally, catalyzes the conversion of glucosamine-6-phosphate to glucosamine-1-phosphate. The sequence is that of Probable phosphoglucosamine mutase from Methanosphaera stadtmanae (strain ATCC 43021 / DSM 3091 / JCM 11832 / MCB-3).